A 562-amino-acid polypeptide reads, in one-letter code: NAD-dependent malic enzyme (562 aa).

Catalysis depends on Tyr-101, which acts as the Proton donor. Residue Arg-154 coordinates NAD(+). Lys-172 (proton acceptor) is an active-site residue. The a divalent metal cation site is built by Glu-243, Asp-244, and Asp-267. NAD(+) contacts are provided by Asp-267 and Asn-415.

The protein belongs to the malic enzymes family. In terms of assembly, homotetramer. Requires Mg(2+) as cofactor. Mn(2+) is required as a cofactor.

The enzyme catalyses (S)-malate + NAD(+) = pyruvate + CO2 + NADH. It catalyses the reaction oxaloacetate + H(+) = pyruvate + CO2. The sequence is that of NAD-dependent malic enzyme from Idiomarina loihiensis (strain ATCC BAA-735 / DSM 15497 / L2-TR).